The sequence spans 247 residues: Killer cell lectin-like receptor subfamily I member 2 (247 aa).

A compositionally biased stretch (basic and acidic residues) spans 1–12 (MPRKKQNERGTN). Residues 1 to 39 (MPRKKQNERGTNKQEIINIETKSSTFQEKQRQSKTDQIS) form a disordered region. At 1-79 (MPRKKQNERG…GTDPWLTTWR (79 aa)) the chain is on the cytoplasmic side. A helical transmembrane segment spans residues 80–100 (IITVILGTSCIILVTKVGFLI). Topologically, residues 101–247 (PNLFSRGEKR…KAYTCEFNLQ (147 aa)) are extracellular. 4 N-linked (GlcNAc...) asparagine glycosylation sites follow: asparagine 125, asparagine 196, asparagine 212, and asparagine 218. Residues 139 to 243 (FGNNFYLFFR…CSSKKAYTCE (105 aa)) form the C-type lectin domain. Intrachain disulfides connect cysteine 160-cysteine 242 and cysteine 221-cysteine 234.

As to quaternary structure, heterodimer with KLRE1. Expressed in natural killer (NK) cells.

The protein localises to the cell membrane. Functionally, lectin-like receptor for natural killer (NK) cells. Heterodimer formation with KLRE1 mediates NK cell cytolytic activity. The sequence is that of Killer cell lectin-like receptor subfamily I member 2 from Rattus norvegicus (Rat).